Reading from the N-terminus, the 294-residue chain is Metallophosphoesterase MPPED2 (294 aa).

Mn(2+) contacts are provided by Asp65, His67, Asp86, Asn117, and His213. Residue 117–118 (NH) participates in GMP binding. GMP is bound by residues 225-226 (KE) and 254-255 (HE). His254 serves as a coordination point for Mn(2+).

This sequence belongs to the UPF0046 family. In terms of assembly, homodimer. Requires Mn(2+) as cofactor. Co(2+) is required as a cofactor. As to expression, expressed in fetal brain (at protein level). detected in fetal and adult brain.

With respect to regulation, inhibited by nmolar levels of AMP and GMP. In terms of biological role, displays low metallophosphoesterase activity (in vitro). May play a role in the development of the nervous system. The sequence is that of Metallophosphoesterase MPPED2 (Mpped2) from Rattus norvegicus (Rat).